The following is a 129-amino-acid chain: Small ribosomal subunit protein uS11 (129 aa).

Belongs to the universal ribosomal protein uS11 family. In terms of assembly, part of the 30S ribosomal subunit. Interacts with proteins S7 and S18. Binds to IF-3.

Located on the platform of the 30S subunit, it bridges several disparate RNA helices of the 16S rRNA. Forms part of the Shine-Dalgarno cleft in the 70S ribosome. This chain is Small ribosomal subunit protein uS11, found in Methylorubrum populi (strain ATCC BAA-705 / NCIMB 13946 / BJ001) (Methylobacterium populi).